We begin with the raw amino-acid sequence, 136 residues long: Protein NrdI (136 aa).

The protein belongs to the NrdI family.

In terms of biological role, probably involved in ribonucleotide reductase function. The polypeptide is Protein NrdI (Erwinia tasmaniensis (strain DSM 17950 / CFBP 7177 / CIP 109463 / NCPPB 4357 / Et1/99)).